Reading from the N-terminus, the 22-residue chain is Antimicrobial peptide 5 (22 aa).

Position 22 is a leucine amide (Leu22).

As to expression, skin.

It localises to the secreted. In terms of biological role, has very strong antimicrobial activity against Gram-positive bacterium S.aureus, Gram-negative bacterium E.coli and yeast C.albicans. Has strong hemolytic activity against human red blood cells. This chain is Antimicrobial peptide 5, found in Xenopus tropicalis (Western clawed frog).